We begin with the raw amino-acid sequence, 466 residues long: Uronate isomerase (466 aa).

The protein belongs to the metallo-dependent hydrolases superfamily. Uronate isomerase family.

The catalysed reaction is D-glucuronate = D-fructuronate. It carries out the reaction aldehydo-D-galacturonate = keto-D-tagaturonate. It functions in the pathway carbohydrate metabolism; pentose and glucuronate interconversion. The polypeptide is Uronate isomerase (Lachnoclostridium phytofermentans (strain ATCC 700394 / DSM 18823 / ISDg) (Clostridium phytofermentans)).